The chain runs to 179 residues: Large ribosomal subunit protein uL16m (179 aa).

This sequence belongs to the universal ribosomal protein uL16 family. In terms of assembly, component of the mitochondrial ribosome large subunit.

It is found in the mitochondrion. In Arabidopsis thaliana (Mouse-ear cress), this protein is Large ribosomal subunit protein uL16m (RPL16).